A 476-amino-acid polypeptide reads, in one-letter code: Angiotensinogen (476 aa).

The N-terminal stretch at 1-24 is a signal peptide; it reads MAPAGVSLRATILCLVAWAGLAAG. 4 N-linked (GlcNAc...) asparagine glycosylation sites follow: Asn-38, Asn-161, Asn-295, and Asn-319. Cysteines 42 and 162 form a disulfide.

It belongs to the serpin family. In terms of processing, in response to low blood pressure, the enzyme renin/REN cleaves angiotensinogen to produce angiotensin-1. Angiotensin-1 is a substrate of ACE (angiotensin converting enzyme) that removes a dipeptide to yield the physiologically active peptide angiotensin-2. Angiotensin-1 and angiotensin-2 can be further processed to generate angiotensin-3, angiotensin-4. Angiotensin 1-9 is cleaved from angiotensin-1 by ACE2 and can be further processed by ACE to produce angiotensin 1-7, angiotensin 1-5 and angiotensin 1-4. Angiotensin 1-7 has also been proposed to be cleaved from angiotensin-2 by ACE2 or from angiotensin-1 by MME (neprilysin). The disulfide bond is labile. Angiotensinogen is present in the circulation in a near 40:60 ratio with the oxidized disulfide-bonded form, which preferentially interacts with receptor-bound renin.

It is found in the secreted. Functionally, essential component of the renin-angiotensin system (RAS), a potent regulator of blood pressure, body fluid and electrolyte homeostasis. In terms of biological role, acts directly on vascular smooth muscle as a potent vasoconstrictor, affects cardiac contractility and heart rate through its action on the sympathetic nervous system, and alters renal sodium and water absorption through its ability to stimulate the zona glomerulosa cells of the adrenal cortex to synthesize and secrete aldosterone. Acts by binding to angiotensin receptors AGTR1 and AGTR2. Also binds the DEAR/FBXW7-AS1 receptor. Its function is as follows. Stimulates aldosterone release. Is a ligand for the G-protein coupled receptor MAS1. Has vasodilator and antidiuretic effects. Has an antithrombotic effect that involves MAS1-mediated release of nitric oxide from platelets. The polypeptide is Angiotensinogen (AGT) (Pan troglodytes (Chimpanzee)).